A 470-amino-acid chain; its full sequence is Uronate isomerase (470 aa).

The protein belongs to the metallo-dependent hydrolases superfamily. Uronate isomerase family.

It carries out the reaction D-glucuronate = D-fructuronate. The catalysed reaction is aldehydo-D-galacturonate = keto-D-tagaturonate. It functions in the pathway carbohydrate metabolism; pentose and glucuronate interconversion. The sequence is that of Uronate isomerase from Cronobacter sakazakii (strain ATCC BAA-894) (Enterobacter sakazakii).